The chain runs to 595 residues: Beta-(1--&gt;2)glucan export ATP-binding/permease protein NdvA (595 aa).

The 281-residue stretch at 21–301 (SLLICAANVM…MSNFINLTVS (281 aa)) folds into the ABC transmembrane type-1 domain. 5 helical membrane-spanning segments follow: residues 22 to 42 (LLIC…PILF), 55 to 75 (IILT…AYVL), 128 to 148 (AIWL…FILI), 152 to 172 (FNMN…YVLI), and 248 to 268 (TAST…VAKG). The region spanning 335–569 (VQFHHVTYKF…GGRFYKLLKA (235 aa)) is the ABC transporter domain. 368-375 (GPTGAGKT) contacts ATP.

It belongs to the ABC transporter superfamily. Beta-(1--&gt;2)glucan exporter (TC 3.A.1.108.1) family. Homodimer.

The protein localises to the cell inner membrane. It catalyses the reaction [(1-&gt;2)-beta-D-glucosyl](n)(in) + ATP + H2O = [(1-&gt;2)-beta-D-glucosyl](n)(out) + ADP + phosphate + H(+). Its function is as follows. Involved in beta-(1--&gt;2)glucan export. Transmembrane domains (TMD) form a pore in the inner membrane and the ATP-binding domain (NBD) is responsible for energy generation. The polypeptide is Beta-(1--&gt;2)glucan export ATP-binding/permease protein NdvA (Bartonella quintana (strain Toulouse) (Rochalimaea quintana)).